We begin with the raw amino-acid sequence, 511 residues long: RNA-splicing ligase RtcB homolog (511 aa).

Positions 125, 128, 233, 265, and 359 each coordinate Mn(2+). 232 to 236 (NHYAE) lines the GMP pocket. GMP is bound by residues 359–360 (HN), 408–411 (GGTM), Ser415, 434–437 (HGAG), and Lys510. His434 acts as the GMP-histidine intermediate in catalysis.

The protein belongs to the RtcB family. Catalytic component of the tRNA-splicing ligase complex. The cofactor is Mn(2+).

It catalyses the reaction a 3'-end 3'-phospho-ribonucleotide-RNA + a 5'-end dephospho-ribonucleoside-RNA + GTP = a ribonucleotidyl-ribonucleotide-RNA + GMP + diphosphate. The catalysed reaction is a 3'-end 2',3'-cyclophospho-ribonucleotide-RNA + a 5'-end dephospho-ribonucleoside-RNA + GTP + H2O = a ribonucleotidyl-ribonucleotide-RNA + GMP + diphosphate + H(+). Its function is as follows. Catalytic subunit of the tRNA-splicing ligase complex that acts by directly joining spliced tRNA halves to mature-sized tRNAs by incorporating the precursor-derived splice junction phosphate into the mature tRNA as a canonical 3',5'-phosphodiester. May act as an RNA ligase with broad substrate specificity, and may function toward other RNAs. The sequence is that of RNA-splicing ligase RtcB homolog from Plasmodium knowlesi (strain H).